The chain runs to 447 residues: Pentatricopeptide repeat-containing protein At3g53170 (447 aa).

PPR repeat units lie at residues 93-127, 128-158, 164-198, 199-233, 235-269, 270-304, 305-339, 340-374, 375-409, and 410-444; these read RCKT…GLKP, TIDV…MKSV, DVFT…GVGC, STVT…GDSL, DVCT…GVQP, DITT…FFSL, TTVT…GVKP, NSIT…DVVL, DTPF…KCKP, and DKIT…GENL.

This sequence belongs to the PPR family. P subfamily.

This chain is Pentatricopeptide repeat-containing protein At3g53170, found in Arabidopsis thaliana (Mouse-ear cress).